We begin with the raw amino-acid sequence, 340 residues long: Protein-lysine N-methyltransferase EEF2KMT (340 aa).

Residue methionine 1 is modified to N-acetylmethionine. Residues tryptophan 139, 165–167 (GSG), tryptophan 238, and alanine 257 contribute to the S-adenosyl-L-methionine site.

This sequence belongs to the class I-like SAM-binding methyltransferase superfamily. EEF2KMT family. As to quaternary structure, interacts with FAM86B2 and FAM86C1P.

It is found in the cytoplasm. The enzyme catalyses L-lysyl-[protein] + 3 S-adenosyl-L-methionine = N(6),N(6),N(6)-trimethyl-L-lysyl-[protein] + 3 S-adenosyl-L-homocysteine + 3 H(+). In terms of biological role, catalyzes the trimethylation of eukaryotic elongation factor 2 (EEF2) on 'Lys-525'. This Bos taurus (Bovine) protein is Protein-lysine N-methyltransferase EEF2KMT (EEF2KMT).